A 299-amino-acid chain; its full sequence is Circadian clock oscillator protein KaiA (299 aa).

Residues 1 to 169 enclose the KaiA N-terminal domain; the sequence is MVSKLSLYLV…RLAEKLRERL (169 aa). The tract at residues 3–135 is psR domain, binds oxidized quinones; it reads SKLSLYLVTP…LHLAPSCALS (133 aa). Residues 170–178 are flexible linker; sequence GYLGVYYKR. In terms of domain architecture, KaiA C-terminal spans 179–287; the sequence is NPKYFYRSLS…CEMYRRSIPR (109 aa).

Homodimer. The KaiABC complex composition changes during the circadian cycle to control KaiC phosphorylation. Complexes KaiC(6), KaiA(2-4):KaiC(6), KaiB(6):KaiC(6) and KaiC(6):KaiB(6):KaiA(12) are among the most important forms, many form cooperatively. KaiA and CikA bind to the same region of the KaiB(fs) form and therefore compete.

In terms of biological role, key component of the KaiABC oscillator complex, which constitutes the main circadian regulator in cyanobacteria. Complex composition changes during the circadian cycle to control KaiC phosphorylation. KaiA stimulates KaiC autophosphorylation, while KaiB sequesters KaiA, leading to KaiC autodephosphorylation. KaiA binding to the KaiC CII domain during the subjective day yields KaiA(2-4):KaiC(6) complexes which stimulate KaiC autophosphorylation. Phospho-Ser-431 KaiC accumulation triggers binding of KaiB during the subjective night to form the KaiB(6):KaiC(6) complex, leading to changes in the output regulators CikA and SasA. KaiB(6):KaiC(6) formation exposes a site for KaiA binding on KaiB that sequesters KaiA from KaiC's CII domain, making the KaiC(6):KaiB(6):KaiA(12) complex resulting in KaiC autodephosphorylation. Complete dephosphorylation of KaiC leads to dissociation of KaiA(2):KaiB(1), completing 1 cycle of the Kai oscillator. Its function is as follows. Binds oxidized quinones via the N-terminal PsR domain, allowing it to sense redox changes and possibly mediate clock input. This chain is Circadian clock oscillator protein KaiA, found in Picosynechococcus sp. (strain ATCC 27264 / PCC 7002 / PR-6) (Agmenellum quadruplicatum).